A 78-amino-acid polypeptide reads, in one-letter code: Large ribosomal subunit protein bL28 (78 aa).

This sequence belongs to the bacterial ribosomal protein bL28 family.

The chain is Large ribosomal subunit protein bL28 from Erwinia tasmaniensis (strain DSM 17950 / CFBP 7177 / CIP 109463 / NCPPB 4357 / Et1/99).